Consider the following 373-residue polypeptide: 3-dehydroquinate synthase (373 aa).

Residues 74 to 79 (DAEAGK), 108 to 112 (GAATD), 132 to 133 (TT), Lys-145, Lys-154, and 172 to 175 (TLET) contribute to the NAD(+) site. Glu-187, His-250, and His-266 together coordinate Zn(2+).

It belongs to the sugar phosphate cyclases superfamily. Dehydroquinate synthase family. It depends on Co(2+) as a cofactor. Zn(2+) is required as a cofactor. NAD(+) serves as cofactor.

The protein resides in the cytoplasm. The catalysed reaction is 7-phospho-2-dehydro-3-deoxy-D-arabino-heptonate = 3-dehydroquinate + phosphate. It functions in the pathway metabolic intermediate biosynthesis; chorismate biosynthesis; chorismate from D-erythrose 4-phosphate and phosphoenolpyruvate: step 2/7. In terms of biological role, catalyzes the conversion of 3-deoxy-D-arabino-heptulosonate 7-phosphate (DAHP) to dehydroquinate (DHQ). The sequence is that of 3-dehydroquinate synthase from Nocardia farcinica (strain IFM 10152).